The chain runs to 534 residues: Zinc finger protein 69 homolog B (534 aa).

Residues Lys-37 and Lys-40 each participate in a glycyl lysine isopeptide (Lys-Gly) (interchain with G-Cter in SUMO2) cross-link. The KRAB domain maps to 74-145 (LTFKDVSVDF…ERDISGVPSS (72 aa)). Residues Lys-178 and Lys-235 each participate in a glycyl lysine isopeptide (Lys-Gly) (interchain with G-Cter in SUMO2) cross-link. 9 consecutive C2H2-type zinc fingers follow at residues 279–301 (FECNICEKIFKQLIHLTEHMRIH), 307–329 (FRCKECGKAFSQSSSLIPHQRIH), 335–357 (YECKECGKTFRHPSSLTQHVRIH), 363–385 (YECRVCEKAFSQSIGLIQHLRTH), 391–413 (FTCKDCGKAFFQIRHLRQHEIIH), 419–441 (YICNVCSKTFSHSTYLTQHQRTH), 447–469 (YKCKECGKAFSQRIHLSIHQRVH), 475–497 (YECSHCGKAFRHDSSFAKHQRIH), and 503–525 (YDCNECGKAFSCSSSLIRHCKTH).

It belongs to the krueppel C2H2-type zinc-finger protein family.

The protein localises to the nucleus. In terms of biological role, may be involved in transcriptional regulation. Essential for Golgi structural integrity. The polypeptide is Zinc finger protein 69 homolog B (ZFP69B) (Homo sapiens (Human)).